Here is a 259-residue protein sequence, read N- to C-terminus: Ribosomal RNA small subunit methyltransferase J (259 aa).

S-adenosyl-L-methionine-binding positions include 109–110, 125–126, 161–162, and Asp179; these read RD, ER, and SS.

This sequence belongs to the methyltransferase superfamily. RsmJ family.

It localises to the cytoplasm. It carries out the reaction guanosine(1516) in 16S rRNA + S-adenosyl-L-methionine = N(2)-methylguanosine(1516) in 16S rRNA + S-adenosyl-L-homocysteine + H(+). Its function is as follows. Specifically methylates the guanosine in position 1516 of 16S rRNA. The polypeptide is Ribosomal RNA small subunit methyltransferase J (Shewanella putrefaciens (strain CN-32 / ATCC BAA-453)).